Reading from the N-terminus, the 821-residue chain is Leucine--tRNA ligase (821 aa).

The 'HIGH' region signature appears at 44–54 (PYPSGRIHMGH). The 'KMSKS' region motif lies at 589–593 (KMSKS). ATP is bound at residue lysine 592.

This sequence belongs to the class-I aminoacyl-tRNA synthetase family.

It localises to the cytoplasm. It carries out the reaction tRNA(Leu) + L-leucine + ATP = L-leucyl-tRNA(Leu) + AMP + diphosphate. The protein is Leucine--tRNA ligase of Campylobacter curvus (strain 525.92).